The primary structure comprises 473 residues: Probable glycine dehydrogenase (decarboxylating) subunit 2 (473 aa).

K266 is modified (N6-(pyridoxal phosphate)lysine).

It belongs to the GcvP family. C-terminal subunit subfamily. In terms of assembly, the glycine cleavage system is composed of four proteins: P, T, L and H. In this organism, the P 'protein' is a heterodimer of two subunits. Pyridoxal 5'-phosphate serves as cofactor.

It catalyses the reaction N(6)-[(R)-lipoyl]-L-lysyl-[glycine-cleavage complex H protein] + glycine + H(+) = N(6)-[(R)-S(8)-aminomethyldihydrolipoyl]-L-lysyl-[glycine-cleavage complex H protein] + CO2. The glycine cleavage system catalyzes the degradation of glycine. The P protein binds the alpha-amino group of glycine through its pyridoxal phosphate cofactor; CO(2) is released and the remaining methylamine moiety is then transferred to the lipoamide cofactor of the H protein. This Thermus thermophilus (strain ATCC BAA-163 / DSM 7039 / HB27) protein is Probable glycine dehydrogenase (decarboxylating) subunit 2.